Here is a 289-residue protein sequence, read N- to C-terminus: tRNA pseudouridine synthase A (289 aa).

Asp67 serves as the catalytic Nucleophile. Tyr125 provides a ligand contact to substrate.

The protein belongs to the tRNA pseudouridine synthase TruA family. In terms of assembly, homodimer.

It carries out the reaction uridine(38/39/40) in tRNA = pseudouridine(38/39/40) in tRNA. Functionally, formation of pseudouridine at positions 38, 39 and 40 in the anticodon stem and loop of transfer RNAs. The chain is tRNA pseudouridine synthase A from Prochlorococcus marinus (strain MIT 9211).